We begin with the raw amino-acid sequence, 311 residues long: Mediator of RNA polymerase II transcription subunit 27 (311 aa).

Serine 132 carries the phosphoserine modification. Lysine 134 carries the post-translational modification N6-methyllysine.

The protein belongs to the Mediator complex subunit 27 family. As to quaternary structure, component of the Mediator complex, which is composed of MED1, MED4, MED6, MED7, MED8, MED9, MED10, MED11, MED12, MED13, MED13L, MED14, MED15, MED16, MED17, MED18, MED19, MED20, MED21, MED22, MED23, MED24, MED25, MED26, MED27, MED29, MED30, MED31, CCNC, CDK8 and CDC2L6/CDK11. The MED12, MED13, CCNC and CDK8 subunits form a distinct module termed the CDK8 module. Mediator containing the CDK8 module is less active than Mediator lacking this module in supporting transcriptional activation. Individual preparations of the Mediator complex lacking one or more distinct subunits have been variously termed ARC, CRSP, DRIP, PC2, SMCC and TRAP.

The protein resides in the nucleus. Component of the Mediator complex, a coactivator involved in the regulated transcription of nearly all RNA polymerase II-dependent genes. Mediator functions as a bridge to convey information from gene-specific regulatory proteins to the basal RNA polymerase II transcription machinery. Mediator is recruited to promoters by direct interactions with regulatory proteins and serves as a scaffold for the assembly of a functional preinitiation complex with RNA polymerase II and the general transcription factors. In Sus scrofa (Pig), this protein is Mediator of RNA polymerase II transcription subunit 27 (MED27).